A 192-amino-acid polypeptide reads, in one-letter code: Thymidine kinase (192 aa).

ATP contacts are provided by residues 9 to 16 and 85 to 88; these read GAMNSGKT and DEAQ. Glutamate 86 serves as the catalytic Proton acceptor. Zn(2+)-binding residues include cysteine 143, cysteine 146, cysteine 180, and histidine 183.

It belongs to the thymidine kinase family. Homotetramer.

It is found in the cytoplasm. It carries out the reaction thymidine + ATP = dTMP + ADP + H(+). This Lactiplantibacillus plantarum (strain ATCC BAA-793 / NCIMB 8826 / WCFS1) (Lactobacillus plantarum) protein is Thymidine kinase.